The primary structure comprises 243 residues: 1-(5-phosphoribosyl)-5-[(5-phosphoribosylamino)methylideneamino] imidazole-4-carboxamide isomerase (243 aa).

The active-site Proton acceptor is Asp-8. The Proton donor role is filled by Asp-130.

The protein belongs to the HisA/HisF family.

The protein localises to the cytoplasm. The catalysed reaction is 1-(5-phospho-beta-D-ribosyl)-5-[(5-phospho-beta-D-ribosylamino)methylideneamino]imidazole-4-carboxamide = 5-[(5-phospho-1-deoxy-D-ribulos-1-ylimino)methylamino]-1-(5-phospho-beta-D-ribosyl)imidazole-4-carboxamide. The protein operates within amino-acid biosynthesis; L-histidine biosynthesis; L-histidine from 5-phospho-alpha-D-ribose 1-diphosphate: step 4/9. This is 1-(5-phosphoribosyl)-5-[(5-phosphoribosylamino)methylideneamino] imidazole-4-carboxamide isomerase from Methylococcus capsulatus (strain ATCC 33009 / NCIMB 11132 / Bath).